The chain runs to 459 residues: 3-carboxy-cis,cis-muconate cycloisomerase (459 aa).

It belongs to the class-II fumarase/aspartase family. As to quaternary structure, homotetramer.

The protein resides in the cytoplasm. It carries out the reaction 2-(carboxymethyl)-5-oxo-2,5-dihydro-2-furoate = 3-carboxy-cis,cis-muconate + H(+). It participates in aromatic compound metabolism; beta-ketoadipate pathway; 5-oxo-4,5-dihydro-2-furylacetate from 3-carboxy-cis,cis-muconate: step 1/2. Functionally, catalyzes an anti cycloisomerization. The chain is 3-carboxy-cis,cis-muconate cycloisomerase (pcaB) from Pseudomonas aeruginosa (strain ATCC 15692 / DSM 22644 / CIP 104116 / JCM 14847 / LMG 12228 / 1C / PRS 101 / PAO1).